The following is a 259-amino-acid chain: Nodulation protein J (259 aa).

Residues 30 to 256 enclose the ABC transmembrane type-2 domain; it reads ASILGNLADP…LVSTALLRRR (227 aa). Helical transmembrane passes span 32 to 52, 64 to 84, 116 to 136, 141 to 161, 174 to 194, and 228 to 248; these read ILGNLADPVIYLFGLGAGLGV, AFLAAGMIATSAMTAATFETI, AWAATKASLAGTGIGIVAAML, WLALLYALPVIAITGLAFASL, YFIFYQTLVITPMLFLSGAVF, and IANVCLHIGVLCIYIVVPFLV.

This sequence belongs to the ABC-2 integral membrane protein family. Lipooligosaccharide exporter (TC 3.A.1.102) subfamily. In terms of assembly, the complex is composed of two ATP-binding proteins (NodI) and two transmembrane proteins (NodJ).

Its subcellular location is the cell inner membrane. Functionally, part of the ABC transporter complex NodIJ involved in the export of the nodulation factors (Nod factors), the bacterial signal molecules that induce symbiosis and subsequent nodulation induction. Nod factors are LCO (lipo-chitin oligosaccharide), a modified beta-1,4-linked N-acetylglucosamine oligosaccharide. This subunit encodes the transporter. In Rhizobium leguminosarum bv. viciae, this protein is Nodulation protein J (nodJ).